A 360-amino-acid polypeptide reads, in one-letter code: Secreted LysM effector LysM2 (360 aa).

A signal peptide spans 1–21 (MKISSLSILPLLGVVSAGIHG). A LysM 1 domain is found at 37 to 85 (TWYLDLVDDSYTCENIESQWDLSHEAFVAWNPGVKKDCSGLKVGLSVCV). Residues 94–113 (ATPTSEASTSSETSSASPTA) are compositionally biased toward low complexity. The interval 94-125 (ATPTSEASTSSETSSASPTASRPPLPSPTQDG) is disordered. N-linked (GlcNAc...) asparagine glycosylation occurs at N129. Positions 132–179 (KFHQAVSGDTCSKIISRYKPITLDQFIEWNPALEKDCSGLWSGYYYCV) constitute a LysM 2 domain. An N-linked (GlcNAc...) asparagine glycan is attached at N204. LysM domains are found at residues 225 to 272 (RWHK…YYCI) and 311 to 357 (KWHQ…YVCV).

This sequence belongs to the secreted LysM effector family.

Its subcellular location is the secreted. It is found in the cell wall. Its function is as follows. Secreted effector that binds two substrates, chitin and N-linked oligosaccharides associated with human skin glycoproteins. Could provide the pathogen with three important functions including shielding host cell wall chitin from the human immune system, shielding the pathogen's glycoproteins from host degradation and immune surveillance, and helping facilitate pathogen adhesion to human skin. The polypeptide is Secreted LysM effector LysM2 (Trichophyton rubrum (strain ATCC MYA-4607 / CBS 118892) (Athlete's foot fungus)).